Here is an 801-residue protein sequence, read N- to C-terminus: Potassium transporter 1 (801 aa).

A disordered region spans residues 1-20; sequence MSSALEVEGSGSPGVEPAAT. The Cytoplasmic portion of the chain corresponds to 1-57; sequence MSSALEVEGSGSPGVEPAATATASRLKRHDSLFGDAEKVSGGKHHGGSAVSWAVTLH. A helical membrane pass occupies residues 58–80; it reads LAFQSVGIIYGDIGTSPLYVYSS. The Extracellular portion of the chain corresponds to 81–94; sequence TFPDGIGHRDDLVG. Residues 95-115 form a helical membrane-spanning segment; it reads VLSLILYTLIIIPMLKYVFIV. The Cytoplasmic segment spans residues 116-181; the sequence is LYANDNGDGG…HKLESSRAAK (66 aa). The helical transmembrane segment at 182–202 threads the bilayer; it reads MALFFLTILGTSMVMGDGTLT. The Extracellular portion of the chain corresponds to 203–219; sequence PAISVLSAVSGIREKAP. Residues 220 to 240 traverse the membrane as a helical segment; the sequence is NLTQTQVVLISVAILFMLFSV. Residues 241-247 lie on the Cytoplasmic side of the membrane; sequence QRFGTDK. A helical transmembrane segment spans residues 248–268; sequence VGYTFAPIISVWFLLIAGIGL. The Extracellular segment spans residues 269–298; sequence YNLVVHEITILKAFNPWYIVQYFRRNGKKG. A helical membrane pass occupies residues 299–319; sequence WVSLGGVVLCVTGTEGMFADL. The Cytoplasmic segment spans residues 320-328; that stretch reads GHFNIRAVQ. Residues 329–349 traverse the membrane as a helical segment; that stretch reads ISFNCILFPSVALCYIGQAAY. Topologically, residues 350–375 are extracellular; sequence LRKFPENVSDTFYKSIPGKYRDRLNF. The chain crosses the membrane as a helical span at residues 376 to 398; sequence GPLFWPTFIVAILAAIIASQAML. Residues 399–429 lie on the Cytoplasmic side of the membrane; that stretch reads SGAFAILSKALSLGCLPRVRVIHTSKKYEGQ. A helical membrane pass occupies residues 430–450; the sequence is VYIPEVNFMMGLASIIVTIAF. The Extracellular portion of the chain corresponds to 451 to 461; the sequence is RTTTSIGNAYG. Residues 462-482 traverse the membrane as a helical segment; the sequence is ICVVTTFMVTTHLMTVVMLLI. The Cytoplasmic portion of the chain corresponds to 483 to 487; it reads WKKHL. Residues 488-508 form a helical membrane-spanning segment; it reads VFILLFYCVFGFTEVVYLSSI. The Extracellular portion of the chain corresponds to 509–511; the sequence is LSK. The helical transmembrane segment at 512-532 threads the bilayer; that stretch reads FVDGGYLPFCFAMVLMTMMAT. The Cytoplasmic portion of the chain corresponds to 533-801; that stretch reads WHYVHVRRYW…LLKVGITYEI (269 aa). A disordered region spans residues 679-728; it reads DDDDEAAARPRRSTSSAVHSEEAIQAASSGRTTASSVQLQAGGEPPAAMD. Over residues 704 to 717 the composition is skewed to polar residues; the sequence is AASSGRTTASSVQL.

Belongs to the HAK/KUP transporter (TC 2.A.72.3) family. Expressed almost exclusively in roots.

It is found in the cell membrane. In terms of biological role, high-affinity potassium transporter. Also transports rubidium, with the same affinity and cesium, with a lower affinity. In Oryza sativa subsp. japonica (Rice), this protein is Potassium transporter 1 (HAK1).